A 207-amino-acid polypeptide reads, in one-letter code: Tereporin-Ts1 (207 aa).

A signal peptide spans 1 to 11 (VIFALVLGNAS). An N-terminal region region spans residues 35-54 (SAGTSLASTILSGLAASGYR). Phosphocholine-binding residues include glycine 111, serine 129, proline 131, tyrosine 164, and tyrosine 165.

The protein belongs to the actinoporin family. Conoidea subfamily. Octamer or nonamer in membranes. Monomer in the soluble state. As to expression, expressed by the venom duct.

The protein resides in the secreted. It is found in the nematocyst. The protein localises to the target cell membrane. In terms of biological role, pore-forming protein that forms pores of around 1 nm and causes cardiac stimulation and cytolysis. The protein is Tereporin-Ts1 of Terebra subulata (Chocolate spotted auger).